The sequence spans 828 residues: Periplasmic nitrate reductase (828 aa).

A signal peptide (tat-type signal) is located at residues 1–33 (MKLSRRDFMKANAAVAAAAAAGLTIPTVVQAAA). A 4Fe-4S Mo/W bis-MGD-type domain is found at 39 to 95 (IKWDKAPCRFCGTGCGVLVGTQNGRIVASQGDPEAAVNRGLSCIKGYFLPKIMYGKD). Positions 46, 49, 53, and 81 each coordinate [4Fe-4S] cluster. Residues Lys-83, Gln-150, Asn-175, Cys-179, 212 to 219 (WGSNMAEM), 243 to 247 (STFEH), 262 to 264 (QTD), Met-372, Gln-376, Asn-482, 508 to 509 (SD), Lys-531, Asp-558, and 718 to 727 (TGRVLEHWHT) each bind Mo-bis(molybdopterin guanine dinucleotide). Phe-794 is a substrate binding site. Asn-802 and Lys-819 together coordinate Mo-bis(molybdopterin guanine dinucleotide).

Belongs to the prokaryotic molybdopterin-containing oxidoreductase family. NasA/NapA/NarB subfamily. As to quaternary structure, component of the periplasmic nitrate reductase NapAB complex composed of NapA and NapB. It depends on [4Fe-4S] cluster as a cofactor. Requires Mo-bis(molybdopterin guanine dinucleotide) as cofactor. Predicted to be exported by the Tat system. The position of the signal peptide cleavage has not been experimentally proven.

The protein localises to the periplasm. It catalyses the reaction 2 Fe(II)-[cytochrome] + nitrate + 2 H(+) = 2 Fe(III)-[cytochrome] + nitrite + H2O. Catalytic subunit of the periplasmic nitrate reductase complex NapAB. Receives electrons from NapB and catalyzes the reduction of nitrate to nitrite. The sequence is that of Periplasmic nitrate reductase from Serratia proteamaculans (strain 568).